The sequence spans 88 residues: Small ribosomal subunit protein bS16 (88 aa).

This sequence belongs to the bacterial ribosomal protein bS16 family.

This is Small ribosomal subunit protein bS16 from Leptospira borgpetersenii serovar Hardjo-bovis (strain L550).